A 1176-amino-acid chain; its full sequence is 3-hydroxy-3-methylglutaryl-coenzyme A reductase (1176 aa).

Residues 1–34 (MSLPNHSGSSAFKSFSYIVGTGIKRAAKLSTRNP) lie on the Cytoplasmic side of the membrane. Residues 35-55 (IEMIVVVLILSSFSYFYLFNL) traverse the membrane as a helical segment. The Lumenal portion of the chain corresponds to 56–299 (ARTSDIFSGT…VKELIDLADN (244 aa)). N-linked (GlcNAc...) asparagine glycosylation is found at Asn-224 and Asn-238. The chain crosses the membrane as a helical span at residues 300–320 (IDIIVILVGYIMMIATFISLY). The SSD domain occupies 301–465 (DIIVILVGYI…FTWYTAVLAL (165 aa)). Over 321–330 (VNMRAMGSRY) the chain is Cytoplasmic. Residues 331 to 351 (TLATAVVFNGFFSFMLALLTV) form a helical membrane-spanning segment. Over 352 to 355 (RALG) the chain is Lumenal. A helical transmembrane segment spans residues 356 to 376 (VDVYPVVLAEAIPFLAVTIGF). At 377–422 (ERPFKLTKRVFQFSKETPLTKQEIRTTIMRAVDTVALPIARDCFME) the chain is on the cytoplasmic side. The helical transmembrane segment at 423 to 443 (IIVLVLGAKSGISGLEEFCLL) threads the bilayer. Position 444 (Ser-444) is a topological domain, lumenal. Residues 445 to 465 (AILLAYDFIIMFTWYTAVLAL) traverse the membrane as a helical segment. Residues 466–524 (KLELLRIREINGISADDIKKGTKKSTGYIRRTVIKAFSDDHAAGANTANQKADGPIIGR) are Cytoplasmic-facing. Residues 525–545 (VKLLMIVGFVVMHIFKFCSAF) traverse the membrane as a helical segment. The Lumenal portion of the chain corresponds to 546-622 (QSVGPQVNIT…DTYAVYIQHP (77 aa)). N-linked (GlcNAc...) asparagine glycosylation is found at Asn-553 and Asn-596. The chain crosses the membrane as a helical span at residues 623-643 (VISKWLTIALFVSLFLNTYLF). The Cytoplasmic segment spans residues 644-1176 (NVAKQPKQIV…GTEPGTCIKS (533 aa)). Positions 699-724 (PNHKRSHNHHHSHSHSHNHHSNHHQS) are disordered. The segment covering 700–721 (NHKRSHNHHHSHSHSHNHHSNH) has biased composition (basic residues). Glu-841 functions as the Charge relay system in the catalytic mechanism. 847 to 853 (STARGCK) serves as a coordination point for CoA. Residues 907-909 (SRF) and 934-942 (DAMGMNMIS) contribute to the NADP(+) site. Catalysis depends on Lys-972, which acts as the Charge relay system. CoA is bound at residue 1001-1003 (VLK). Asp-1048 functions as the Charge relay system in the catalytic mechanism. Position 1145 to 1146 (1145 to 1146 (AH)) interacts with CoA. His-1146 (proton donor) is an active-site residue. 1150–1151 (NR) provides a ligand contact to NADP(+). Residues 1153–1176 (TQAPTITSGPAPSTGTEPGTCIKS) are disordered.

Belongs to the HMG-CoA reductase family.

The protein localises to the endoplasmic reticulum membrane. The catalysed reaction is (R)-mevalonate + 2 NADP(+) + CoA = (3S)-3-hydroxy-3-methylglutaryl-CoA + 2 NADPH + 2 H(+). It participates in metabolic intermediate biosynthesis; (R)-mevalonate biosynthesis; (R)-mevalonate from acetyl-CoA: step 3/3. Functionally, HMG-CoA reductase; part of the first module of ergosterol biosynthesis pathway that includes the early steps of the pathway, conserved across all eukaryotes, and which results in the formation of mevalonate from acetyl-coenzyme A (acetyl-CoA). In this module, the cytosolic acetyl-CoA acetyltransferase catalyzes the formation of acetoacetyl-CoA. The hydroxymethylglutaryl-CoA synthase then condenses acetyl-CoA with acetoacetyl-CoA to form HMG-CoA. The rate-limiting step of the early module is the reduction to mevalonate by the 3-hydroxy-3-methylglutaryl-coenzyme A (HMG-CoA) reductase hmgA. The chain is 3-hydroxy-3-methylglutaryl-coenzyme A reductase from Phycomyces blakesleeanus (strain ATCC 8743b / DSM 1359 / FGSC 10004 / NBRC 33097 / NRRL 1555).